Here is a 255-residue protein sequence, read N- to C-terminus: Pyrroloquinoline-quinone synthase (255 aa).

This sequence belongs to the PqqC family.

The catalysed reaction is 6-(2-amino-2-carboxyethyl)-7,8-dioxo-1,2,3,4,7,8-hexahydroquinoline-2,4-dicarboxylate + 3 O2 = pyrroloquinoline quinone + 2 H2O2 + 2 H2O + H(+). It functions in the pathway cofactor biosynthesis; pyrroloquinoline quinone biosynthesis. Functionally, ring cyclization and eight-electron oxidation of 3a-(2-amino-2-carboxyethyl)-4,5-dioxo-4,5,6,7,8,9-hexahydroquinoline-7,9-dicarboxylic-acid to PQQ. This chain is Pyrroloquinoline-quinone synthase, found in Acinetobacter baylyi (strain ATCC 33305 / BD413 / ADP1).